The primary structure comprises 409 residues: Putative competence-damage inducible protein (409 aa).

The protein belongs to the CinA family.

The polypeptide is Putative competence-damage inducible protein (Clostridium botulinum (strain Langeland / NCTC 10281 / Type F)).